Consider the following 208-residue polypeptide: Uracil phosphoribosyltransferase (208 aa).

Residues R78, R103, and 130 to 138 each bind 5-phospho-alpha-D-ribose 1-diphosphate; that span reads DPMLATGGS. Residues I193 and 198-200 each bind uracil; that span reads GDA. Residue D199 coordinates 5-phospho-alpha-D-ribose 1-diphosphate.

Belongs to the UPRTase family. Mg(2+) is required as a cofactor.

It carries out the reaction UMP + diphosphate = 5-phospho-alpha-D-ribose 1-diphosphate + uracil. It functions in the pathway pyrimidine metabolism; UMP biosynthesis via salvage pathway; UMP from uracil: step 1/1. Allosterically activated by GTP. Its function is as follows. Catalyzes the conversion of uracil and 5-phospho-alpha-D-ribose 1-diphosphate (PRPP) to UMP and diphosphate. The sequence is that of Uracil phosphoribosyltransferase from Aliivibrio salmonicida (strain LFI1238) (Vibrio salmonicida (strain LFI1238)).